A 337-amino-acid polypeptide reads, in one-letter code: GTP 3',8-cyclase (337 aa).

One can recognise a Radical SAM core domain in the interval 17-243; sequence PFQRQYYYLR…HKSHTDGPAK (227 aa). Arg-26 lines the GTP pocket. [4Fe-4S] cluster contacts are provided by Cys-33 and Cys-37. Tyr-39 provides a ligand contact to S-adenosyl-L-methionine. Cys-40 contacts [4Fe-4S] cluster. Position 76 (Arg-76) interacts with GTP. Gly-80 lines the S-adenosyl-L-methionine pocket. Residue Thr-107 participates in GTP binding. An S-adenosyl-L-methionine-binding site is contributed by Ser-131. Lys-168 serves as a coordination point for GTP. Met-202 contributes to the S-adenosyl-L-methionine binding site. [4Fe-4S] cluster-binding residues include Cys-265 and Cys-268. 270–272 contributes to the GTP binding site; the sequence is RLR. Cys-282 lines the [4Fe-4S] cluster pocket.

Belongs to the radical SAM superfamily. MoaA family. In terms of assembly, monomer and homodimer. Requires [4Fe-4S] cluster as cofactor.

The enzyme catalyses GTP + AH2 + S-adenosyl-L-methionine = (8S)-3',8-cyclo-7,8-dihydroguanosine 5'-triphosphate + 5'-deoxyadenosine + L-methionine + A + H(+). It participates in cofactor biosynthesis; molybdopterin biosynthesis. In terms of biological role, catalyzes the cyclization of GTP to (8S)-3',8-cyclo-7,8-dihydroguanosine 5'-triphosphate. The sequence is that of GTP 3',8-cyclase from Haemophilus influenzae (strain PittEE).